A 124-amino-acid chain; its full sequence is Large ribosomal subunit protein bL12 (124 aa).

Belongs to the bacterial ribosomal protein bL12 family. In terms of assembly, homodimer. Part of the ribosomal stalk of the 50S ribosomal subunit. Forms a multimeric L10(L12)X complex, where L10 forms an elongated spine to which 2 to 4 L12 dimers bind in a sequential fashion. Binds GTP-bound translation factors.

In terms of biological role, forms part of the ribosomal stalk which helps the ribosome interact with GTP-bound translation factors. Is thus essential for accurate translation. The protein is Large ribosomal subunit protein bL12 of Burkholderia mallei (strain NCTC 10247).